Consider the following 1177-residue polypeptide: DNA-directed RNA polymerase subunit beta (1177 aa).

A compositionally biased stretch (acidic residues) spans 1147 to 1161 (DDTEIEMRDTEDDDD). A disordered region spans residues 1147–1177 (DDTEIEMRDTEDDDDHQSADKLNVEVETTKE). Over residues 1162 to 1177 (HQSADKLNVEVETTKE) the composition is skewed to basic and acidic residues.

The protein belongs to the RNA polymerase beta chain family. In terms of assembly, the RNAP catalytic core consists of 2 alpha, 1 beta, 1 beta' and 1 omega subunit. When a sigma factor is associated with the core the holoenzyme is formed, which can initiate transcription.

It carries out the reaction RNA(n) + a ribonucleoside 5'-triphosphate = RNA(n+1) + diphosphate. In terms of biological role, DNA-dependent RNA polymerase catalyzes the transcription of DNA into RNA using the four ribonucleoside triphosphates as substrates. This chain is DNA-directed RNA polymerase subunit beta, found in Bacillus thuringiensis (strain Al Hakam).